The primary structure comprises 213 residues: Vacuolar protein sorting-associated protein 32 homolog 1 (213 aa).

2 coiled-coil regions span residues 11–42 (KQETSTLQTLDKLNETLEMLEKKENVLLKKAT) and 118–176 (TNID…QLLQ). The disordered stretch occupies residues 180–213 (IHVPQGNKPARAPAQKQPTAEEDELAALQAEMAL).

Belongs to the SNF7 family. As to quaternary structure, component of the endosomal sorting required for transport complex III (ESCRT-III), composed at least of VPS2, VPS20, VPS24 and VPS32. Interacts with SKD1. Interacts with BRO1/ALIX.

The protein localises to the endosome. In terms of biological role, component of the ESCRT-III complex, which is required for multivesicular bodies (MVBs) formation and sorting of endosomal cargo proteins into MVBs. The ESCRT-III complex is probably involved in the concentration of MVB cargo. The sequence is that of Vacuolar protein sorting-associated protein 32 homolog 1 (VPS32.1) from Arabidopsis thaliana (Mouse-ear cress).